A 428-amino-acid polypeptide reads, in one-letter code: Forkhead box protein B2 (428 aa).

The segment at residues Gln-12–Leu-103 is a DNA-binding region (fork-head). 2 disordered regions span residues His-118–Ala-217 and Pro-408–Ser-428. Residues Leu-136–Pro-163 are compositionally biased toward basic residues. Composition is skewed to pro residues over residues Pro-164–Met-174 and Ala-183–Pro-192. Over residues Ser-193–Ala-217 the composition is skewed to low complexity.

It localises to the nucleus. In terms of biological role, transcription factor. This is Forkhead box protein B2 (Foxb2) from Mus musculus (Mouse).